We begin with the raw amino-acid sequence, 117 residues long: Ribosomal silencing factor RsfS (117 aa).

This sequence belongs to the Iojap/RsfS family. As to quaternary structure, interacts with ribosomal protein uL14 (rplN).

Its subcellular location is the cytoplasm. Functions as a ribosomal silencing factor. Interacts with ribosomal protein uL14 (rplN), blocking formation of intersubunit bridge B8. Prevents association of the 30S and 50S ribosomal subunits and the formation of functional ribosomes, thus repressing translation. The chain is Ribosomal silencing factor RsfS from Halalkalibacterium halodurans (strain ATCC BAA-125 / DSM 18197 / FERM 7344 / JCM 9153 / C-125) (Bacillus halodurans).